The chain runs to 392 residues: Putative pectate lyase 21 (392 aa).

The first 21 residues, 1-21, serve as a signal peptide directing secretion; it reads MSIVCTFFLFLLNTSFAFAFA. An N-linked (GlcNAc...) asparagine glycan is attached at Asn38. Residues Asp189, Asp213, and Asp217 each contribute to the Ca(2+) site. N-linked (GlcNAc...) asparagine glycosylation occurs at Asn220. Arg269 is an active-site residue.

The protein belongs to the polysaccharide lyase 1 family. It depends on Ca(2+) as a cofactor.

The catalysed reaction is Eliminative cleavage of (1-&gt;4)-alpha-D-galacturonan to give oligosaccharides with 4-deoxy-alpha-D-galact-4-enuronosyl groups at their non-reducing ends.. Its pathway is glycan metabolism; pectin degradation; 2-dehydro-3-deoxy-D-gluconate from pectin: step 2/5. The polypeptide is Putative pectate lyase 21 (Arabidopsis thaliana (Mouse-ear cress)).